The following is a 394-amino-acid chain: Elongation factor Tu 1 (394 aa).

The 195-residue stretch at 10 to 204 (KPHVNVGTIG…YLDSYIPEPE (195 aa)) folds into the tr-type G domain. Positions 19–26 (GHVDHGKT) are G1. Residue 19-26 (GHVDHGKT) participates in GTP binding. Position 26 (Thr26) interacts with Mg(2+). The tract at residues 60–64 (GITIN) is G2. The tract at residues 81–84 (DCPG) is G3. GTP-binding positions include 81-85 (DCPGH) and 136-139 (NKCD). The segment at 136-139 (NKCD) is G4. Residues 174–176 (SAL) form a G5 region.

This sequence belongs to the TRAFAC class translation factor GTPase superfamily. Classic translation factor GTPase family. EF-Tu/EF-1A subfamily. Monomer.

It is found in the cytoplasm. The catalysed reaction is GTP + H2O = GDP + phosphate + H(+). Its function is as follows. GTP hydrolase that promotes the GTP-dependent binding of aminoacyl-tRNA to the A-site of ribosomes during protein biosynthesis. This is Elongation factor Tu 1 from Serratia proteamaculans (strain 568).